The following is a 321-amino-acid chain: Lipoyl synthase (321 aa).

[4Fe-4S] cluster contacts are provided by cysteine 68, cysteine 73, cysteine 79, cysteine 94, cysteine 98, cysteine 101, and serine 308. In terms of domain architecture, Radical SAM core spans 80–297 (FNHGTATFMI…KVIAEDLGFS (218 aa)).

Belongs to the radical SAM superfamily. Lipoyl synthase family. [4Fe-4S] cluster serves as cofactor.

The protein localises to the cytoplasm. It catalyses the reaction [[Fe-S] cluster scaffold protein carrying a second [4Fe-4S](2+) cluster] + N(6)-octanoyl-L-lysyl-[protein] + 2 oxidized [2Fe-2S]-[ferredoxin] + 2 S-adenosyl-L-methionine + 4 H(+) = [[Fe-S] cluster scaffold protein] + N(6)-[(R)-dihydrolipoyl]-L-lysyl-[protein] + 4 Fe(3+) + 2 hydrogen sulfide + 2 5'-deoxyadenosine + 2 L-methionine + 2 reduced [2Fe-2S]-[ferredoxin]. Its pathway is protein modification; protein lipoylation via endogenous pathway; protein N(6)-(lipoyl)lysine from octanoyl-[acyl-carrier-protein]: step 2/2. Its function is as follows. Catalyzes the radical-mediated insertion of two sulfur atoms into the C-6 and C-8 positions of the octanoyl moiety bound to the lipoyl domains of lipoate-dependent enzymes, thereby converting the octanoylated domains into lipoylated derivatives. This is Lipoyl synthase from Shewanella amazonensis (strain ATCC BAA-1098 / SB2B).